A 399-amino-acid polypeptide reads, in one-letter code: Tetracycline resistance protein, class A (399 aa).

The next 12 helical transmembrane spans lie at 7–29, 44–66, 73–95, 99–121, 133–155, 160–182, 203–225, 245–267, 279–298, 302–324, 336–358, and 368–390; these read LIVI…PVLP, HYGI…LGAL, RPVL…TAPF, LYIG…AYIA, FGFM…GLMG, HAPF…FLLP, FRWA…MQLV, ATTI…AMIT, ALML…AFAT, MAFP…QAML, LQGS…FTAI, and GWAW…RGLW.

It belongs to the major facilitator superfamily. TCR/Tet family.

The protein localises to the cell inner membrane. Its function is as follows. Resistance to tetracycline by an active tetracycline efflux. This is an energy-dependent process that decreases the accumulation of the antibiotic in whole cells. This protein functions as a metal-tetracycline/H(+) antiporter. This chain is Tetracycline resistance protein, class A (tetA), found in Escherichia coli.